The sequence spans 244 residues: Transmembrane protein 176A (244 aa).

Phosphoserine is present on S42. A run of 4 helical transmembrane segments spans residues 60–80 (VLVA…VLGG), 92–112 (SEGA…VAFL), 122–142 (ALMR…AIVI), and 204–224 (LLGI…VYIW).

It belongs to the TMEM176 family. As to quaternary structure, interacts with MCOLN2. Specifically expressed in lung, kidney and spleen.

The protein resides in the membrane. In Mus musculus (Mouse), this protein is Transmembrane protein 176A (Tmem176a).